The primary structure comprises 255 residues: Triosephosphate isomerase (255 aa).

Position 9–11 (9–11) interacts with substrate; that stretch reads NWK. The Electrophile role is filled by H95. Catalysis depends on E167, which acts as the Proton acceptor. Residues G173, S212, and 233–234 contribute to the substrate site; that span reads GG.

It belongs to the triosephosphate isomerase family. As to quaternary structure, homodimer.

Its subcellular location is the cytoplasm. The catalysed reaction is D-glyceraldehyde 3-phosphate = dihydroxyacetone phosphate. The protein operates within carbohydrate biosynthesis; gluconeogenesis. It functions in the pathway carbohydrate degradation; glycolysis; D-glyceraldehyde 3-phosphate from glycerone phosphate: step 1/1. Involved in the gluconeogenesis. Catalyzes stereospecifically the conversion of dihydroxyacetone phosphate (DHAP) to D-glyceraldehyde-3-phosphate (G3P). The chain is Triosephosphate isomerase from Serratia proteamaculans (strain 568).